Consider the following 254-residue polypeptide: tRNA (guanine-N(7)-)-methyltransferase (254 aa).

The disordered stretch occupies residues 1 to 34 (MNTNTPAHPPEGAPLSEATQAALASAEHAPDSPG). S-adenosyl-L-methionine contacts are provided by Glu-87, Glu-112, Asp-139, and Asp-162. Asp-162 is a catalytic residue. Substrate is bound by residues Lys-166, Asp-198, and 233–236 (TKFE).

Belongs to the class I-like SAM-binding methyltransferase superfamily. TrmB family.

It carries out the reaction guanosine(46) in tRNA + S-adenosyl-L-methionine = N(7)-methylguanosine(46) in tRNA + S-adenosyl-L-homocysteine. Its pathway is tRNA modification; N(7)-methylguanine-tRNA biosynthesis. In terms of biological role, catalyzes the formation of N(7)-methylguanine at position 46 (m7G46) in tRNA. In Bordetella bronchiseptica (strain ATCC BAA-588 / NCTC 13252 / RB50) (Alcaligenes bronchisepticus), this protein is tRNA (guanine-N(7)-)-methyltransferase.